The following is a 443-amino-acid chain: Chromosome partition protein MukF (443 aa).

Residues 209 to 237 are leucine-zipper; it reads LDETSGNLRELQDVLNASGDKLQSQLLRI.

The protein belongs to the MukF family. As to quaternary structure, interacts, and probably forms a ternary complex, with MukE and MukB via its C-terminal region. The complex formation is stimulated by calcium or magnesium. It is required for an interaction between MukE and MukB.

Its subcellular location is the cytoplasm. The protein resides in the nucleoid. Functionally, involved in chromosome condensation, segregation and cell cycle progression. May participate in facilitating chromosome segregation by condensation DNA from both sides of a centrally located replisome during cell division. Not required for mini-F plasmid partitioning. Probably acts via its interaction with MukB and MukE. Overexpression results in anucleate cells. It has a calcium binding activity. The sequence is that of Chromosome partition protein MukF from Glaesserella parasuis serovar 5 (strain SH0165) (Haemophilus parasuis).